A 157-amino-acid chain; its full sequence is Cytochrome c-type biogenesis protein CcmE (157 aa).

Residues Met1 to Arg8 are Cytoplasmic-facing. A helical; Signal-anchor for type II membrane protein transmembrane segment spans residues Leu9–Ala29. At Leu30–Ser157 the chain is on the periplasmic side. Heme is bound by residues His124 and Tyr128.

It belongs to the CcmE/CycJ family.

It is found in the cell inner membrane. In terms of biological role, heme chaperone required for the biogenesis of c-type cytochromes. Transiently binds heme delivered by CcmC and transfers the heme to apo-cytochromes in a process facilitated by CcmF and CcmH. This Saccharophagus degradans (strain 2-40 / ATCC 43961 / DSM 17024) protein is Cytochrome c-type biogenesis protein CcmE.